Here is a 248-residue protein sequence, read N- to C-terminus: Caffeoyl-CoA O-methyltransferase 3 (248 aa).

K22 is a binding site for substrate. Residues T64, E86, 88–89 (GV), S94, D112, and A141 contribute to the S-adenosyl-L-methionine site. D164 is a binding site for substrate. An a divalent metal cation-binding site is contributed by D164. D166 lines the S-adenosyl-L-methionine pocket. The a divalent metal cation site is built by D190 and N191. Residue N195 participates in substrate binding.

This sequence belongs to the class I-like SAM-binding methyltransferase superfamily. Cation-dependent O-methyltransferase family. CCoAMT subfamily. A divalent metal cation serves as cofactor. As to expression, mostly expressed in petal limbs and tubes, and, at low levels, in stems, roots and leaves.

The protein resides in the cytoplasm. It localises to the cytosol. It catalyses the reaction (E)-caffeoyl-CoA + S-adenosyl-L-methionine = (E)-feruloyl-CoA + S-adenosyl-L-homocysteine + H(+). The enzyme catalyses (E)-5-hydroxyferuloyl-CoA + S-adenosyl-L-methionine = (E)-sinapoyl-CoA + S-adenosyl-L-homocysteine + H(+). It participates in aromatic compound metabolism; phenylpropanoid biosynthesis. Its function is as follows. Involved in the production of floral volatile phenylpropanoids in flowers of fragrant cultivars (e.g. cv. Mitchell and cv. V26) from cinnamic acid, a common precursor with the anthocyanin biosynthesis pathway involved in flower pigmentation. Methylates caffeoyl-CoA to feruloyl-CoA, also able to methylate 5-hydroxyferuloyl-CoA. The chain is Caffeoyl-CoA O-methyltransferase 3 from Petunia hybrida (Petunia).